We begin with the raw amino-acid sequence, 184 residues long: UPF0316 protein YebE (184 aa).

Helical transmembrane passes span 9–29 (GIAM…FFTI), 41–61 (LAAG…SLVL), and 67–87 (IQNV…GMKI).

Belongs to the UPF0316 family.

The protein localises to the cell membrane. This chain is UPF0316 protein YebE (yebE), found in Bacillus subtilis (strain 168).